The primary structure comprises 202 residues: Small ribosomal subunit protein uS4c (202 aa).

Positions 90-154 constitute an S4 RNA-binding domain; sequence MRLDNIIFRL…SQSIIIKNLN (65 aa).

This sequence belongs to the universal ribosomal protein uS4 family. As to quaternary structure, part of the 30S ribosomal subunit. Contacts protein S5. The interaction surface between S4 and S5 is involved in control of translational fidelity.

Its subcellular location is the plastid. It is found in the chloroplast. Its function is as follows. One of the primary rRNA binding proteins, it binds directly to 16S rRNA where it nucleates assembly of the body of the 30S subunit. Functionally, with S5 and S12 plays an important role in translational accuracy. This chain is Small ribosomal subunit protein uS4c (rps4), found in Marchantia polymorpha (Common liverwort).